A 300-amino-acid polypeptide reads, in one-letter code: Cation-efflux pump FieF (300 aa).

A helical transmembrane segment spans residues 24 to 44 (LLIKIFAWWYTGSVSILAALV). Positions 45 and 49 each coordinate Zn(2+). Helical transmembrane passes span 82–102 (AALA…LTGI) and 114–134 (AGVG…LVTF). Residues His153 and Asp157 each coordinate Zn(2+). Helical transmembrane passes span 156-176 (SDVM…YGWH) and 178-198 (ADAL…LRMG).

This sequence belongs to the cation diffusion facilitator (CDF) transporter (TC 2.A.4) family. FieF subfamily. Homodimer.

It localises to the cell inner membrane. It carries out the reaction Zn(2+)(in) + H(+)(out) = Zn(2+)(out) + H(+)(in). The catalysed reaction is Cd(2+)(in) + H(+)(out) = Cd(2+)(out) + H(+)(in). It catalyses the reaction Fe(2+)(in) + H(+)(out) = Fe(2+)(out) + H(+)(in). Functionally, divalent metal cation transporter which exports Zn(2+), Cd(2+) and possibly Fe(2+). May be involved in zinc and iron detoxification by efflux. In Klebsiella pneumoniae subsp. pneumoniae (strain ATCC 700721 / MGH 78578), this protein is Cation-efflux pump FieF.